A 244-amino-acid chain; its full sequence is rRNA adenine N-6-methyltransferase (244 aa).

Positions 11, 13, 38, 59, 84, and 101 each coordinate S-adenosyl-L-methionine.

This sequence belongs to the class I-like SAM-binding methyltransferase superfamily. rRNA adenine N(6)-methyltransferase family.

The enzyme catalyses adenosine(2085) in 23S rRNA + 2 S-adenosyl-L-methionine = N(6)-dimethyladenosine(2085) in 23S rRNA + 2 S-adenosyl-L-homocysteine + 2 H(+). Functionally, this protein produces a dimethylation of the adenine residue at position 2085 in 23S rRNA, resulting in reduced affinity between ribosomes and macrolide-lincosamide-streptogramin B antibiotics. Is involved in erythromycin resistance. The chain is rRNA adenine N-6-methyltransferase (ermGT) from Limosilactobacillus reuteri (Lactobacillus reuteri).